The sequence spans 219 residues: MKNAAIIAAAGSGKRFGSRVSKQFLNLSGKPVFLWSVEAFASIKSFKQIIVVVPSDMVEFLSLKYKTGFVCATGGNERFDSVKNGLALVGDDIDFIAVHDASRPLISKKDILLVLEKAAKTKVAVAVEKAKDTVKLVSADGYILKTLDRTILRNAQTPQIFKTELLKRAYSRKMSAGTTDDSQLVENLKIKVSAVETKFLNFKITTKQDFELAEKILKS.

Belongs to the IspD/TarI cytidylyltransferase family. IspD subfamily.

The catalysed reaction is 2-C-methyl-D-erythritol 4-phosphate + CTP + H(+) = 4-CDP-2-C-methyl-D-erythritol + diphosphate. It participates in isoprenoid biosynthesis; isopentenyl diphosphate biosynthesis via DXP pathway; isopentenyl diphosphate from 1-deoxy-D-xylulose 5-phosphate: step 2/6. Its function is as follows. Catalyzes the formation of 4-diphosphocytidyl-2-C-methyl-D-erythritol from CTP and 2-C-methyl-D-erythritol 4-phosphate (MEP). The protein is 2-C-methyl-D-erythritol 4-phosphate cytidylyltransferase of Endomicrobium trichonymphae.